Reading from the N-terminus, the 251-residue chain is Probable transcriptional regulatory protein SYNPCC7002_A0851 (251 aa).

A Response regulatory domain is found at 20 to 141 (RILVVEDEAV…ELVARCRALL (122 aa)). Asp76 carries the 4-aspartylphosphate modification. The ompR/PhoB-type DNA-binding region spans 153–251 (NSVRQFKDIS…TVRGFGYRFG (99 aa)).

Phosphorylation.

This chain is Probable transcriptional regulatory protein SYNPCC7002_A0851, found in Picosynechococcus sp. (strain ATCC 27264 / PCC 7002 / PR-6) (Agmenellum quadruplicatum).